A 503-amino-acid chain; its full sequence is Maturase K (503 aa).

The protein belongs to the intron maturase 2 family. MatK subfamily.

It localises to the plastid. Its subcellular location is the chloroplast. Usually encoded in the trnK tRNA gene intron. Probably assists in splicing its own and other chloroplast group II introns. This Panax ginseng (Korean ginseng) protein is Maturase K.